We begin with the raw amino-acid sequence, 213 residues long: ATP-dependent Clp protease proteolytic subunit 1 (213 aa).

Ser114 (nucleophile) is an active-site residue. Residue His139 is part of the active site.

It belongs to the peptidase S14 family. Fourteen ClpP subunits assemble into 2 heptameric rings which stack back to back to give a disk-like structure with a central cavity, resembling the structure of eukaryotic proteasomes.

The protein localises to the cytoplasm. It carries out the reaction Hydrolysis of proteins to small peptides in the presence of ATP and magnesium. alpha-casein is the usual test substrate. In the absence of ATP, only oligopeptides shorter than five residues are hydrolyzed (such as succinyl-Leu-Tyr-|-NHMec, and Leu-Tyr-Leu-|-Tyr-Trp, in which cleavage of the -Tyr-|-Leu- and -Tyr-|-Trp bonds also occurs).. Functionally, cleaves peptides in various proteins in a process that requires ATP hydrolysis. Has a chymotrypsin-like activity. Plays a major role in the degradation of misfolded proteins. The polypeptide is ATP-dependent Clp protease proteolytic subunit 1 (Pseudomonas aeruginosa (strain ATCC 15692 / DSM 22644 / CIP 104116 / JCM 14847 / LMG 12228 / 1C / PRS 101 / PAO1)).